An 892-amino-acid chain; its full sequence is Alanine--tRNA ligase (892 aa).

The Zn(2+) site is built by H565, H569, C675, and H679. The segment at 852-871 (MGGKGGGGRPDMAQAGGPEA) is disordered.

Belongs to the class-II aminoacyl-tRNA synthetase family. Requires Zn(2+) as cofactor.

The protein localises to the cytoplasm. It carries out the reaction tRNA(Ala) + L-alanine + ATP = L-alanyl-tRNA(Ala) + AMP + diphosphate. Catalyzes the attachment of alanine to tRNA(Ala) in a two-step reaction: alanine is first activated by ATP to form Ala-AMP and then transferred to the acceptor end of tRNA(Ala). Also edits incorrectly charged Ser-tRNA(Ala) and Gly-tRNA(Ala) via its editing domain. The polypeptide is Alanine--tRNA ligase (Parvibaculum lavamentivorans (strain DS-1 / DSM 13023 / NCIMB 13966)).